The chain runs to 467 residues: Cysteine--tRNA ligase (467 aa).

Zn(2+) is bound at residue Cys29. A 'HIGH' region motif is present at residues 31-41; that stretch reads PTVYNYVHIGN. The Zn(2+) site is built by Cys209, His234, and Glu238. Positions 267–271 match the 'KMSKS' region motif; that stretch reads KMSKS. Lys270 contacts ATP.

It belongs to the class-I aminoacyl-tRNA synthetase family. Monomer. Zn(2+) serves as cofactor.

It is found in the cytoplasm. The catalysed reaction is tRNA(Cys) + L-cysteine + ATP = L-cysteinyl-tRNA(Cys) + AMP + diphosphate. This chain is Cysteine--tRNA ligase, found in Xylella fastidiosa (strain 9a5c).